We begin with the raw amino-acid sequence, 82 residues long: Cyclin-dependent protein kinase inhibitor SMR5 (82 aa).

Positions 1 to 26 (MEEKNYDDGDTVTVDDDYQMGCTTPT) are disordered. Residues 8-18 (DGDTVTVDDDY) are compositionally biased toward acidic residues.

As to quaternary structure, interacts with CDKA-1 and D-type cyclins. Expressed in columella cells in the roots and in root meristems after induction.

In terms of biological role, probable cyclin-dependent protein kinase (CDK) inhibitor that functions as a repressor of mitosis in the endoreduplication cell cycle. Acts as a potent cell cycle inhibitor, regulating a hydroxyurea-dependent checkpoint in leaves. Essential to activate a high-light-dependent cell cycle checkpoint. This chain is Cyclin-dependent protein kinase inhibitor SMR5, found in Arabidopsis thaliana (Mouse-ear cress).